We begin with the raw amino-acid sequence, 195 residues long: Transcription factor 15 (195 aa).

Residues 44-65 (LEAARRGPGPGSGRRASNGAGP) form a disordered region. A compositionally biased stretch (low complexity) spans 56 to 65 (GRRASNGAGP). A Phosphoserine modification is found at Ser-60. Residues 70 to 122 (RQRQAANARERDRTQSVNTAFTALRTLIPTEPVDRKLSKIETLRLASSYIAHL) enclose the bHLH domain.

In terms of assembly, heterodimer; efficient DNA binding requires dimerization with another bHLH protein, such as TCF3/E12. Interacts with MEOX2. Expressed in heart and skeletal muscle. Specifically expressed in a subpopulation of embryonic stem cells (ESCs), that are still undifferentiated but primed for ifferentiation. Expressed in hematopoietic stem cells (HSCs).

It localises to the nucleus. Functionally, early transcription factor that plays a key role in somitogenesis, paraxial mesoderm development and regulation of stem cell pluripotency. Essential for the mesenchymal to epithelial transition associated with somite formation. Required for somite morphogenesis, thereby regulating patterning of the axial skeleton and skeletal muscles. Required for proper localization of somite epithelium markers during the mesenchymal to epithelial transition. Also plays a key role in regulation of stem cell pluripotency. Promotes pluripotency exit of embryonic stem cells (ESCs) by priming ESCs for differentiation. Acts as a key regulator of self-renewal of hematopoietic stem cells (HSCs) by mediating HSCs quiescence and long-term self-renewal. Together with MEOX2, regulates transcription in heart endothelial cells to regulate fatty acid transport across heart endothelial cells. Acts by forming a heterodimer with another helix-loop-helix (bHLH) protein, such as TCF3/E12, that binds DNA on E-box motifs (5'-CANNTG-3') and activates transcription of target genes. The protein is Transcription factor 15 of Mus musculus (Mouse).